Consider the following 1173-residue polypeptide: SMC5-SMC6 complex localization factor protein 2 (1173 aa).

Positions 1 to 109 (MTRRCMPARP…KPKRVPPEKS (109 aa)) are disordered. Basic and acidic residues-rich tracts occupy residues 39–50 (KRTESPGDRKQS) and 88–106 (QFERKLSSPKESKPKRVPP). An APIM motif motif is present at residues 137 to 149 (SLASKYLAKGTNI). Disordered stretches follow at residues 161-230 (MKSL…PEES), 256-275 (QMEQRINSENSFSEASSLSL), 280-373 (ERKY…QKEK), 394-620 (KEPS…EEET), and 635-663 (TPAATGKPPALSKGLRSQSSDYTGHVHPG). The span at 181–199 (ENNEKNDRDRGKTNADSKK) shows a compositional bias: basic and acidic residues. Composition is skewed to low complexity over residues 212-221 (SSRSLSSRSS) and 262-275 (NSENSFSEASSLSL). Basic and acidic residues predominate over residues 280–293 (ERKYKPRQEQRKQN). Residues 317–330 (SDSWEPTSAGSKQN) show a composition bias toward polar residues. Composition is skewed to basic and acidic residues over residues 339–349 (NSVDSDLKSTR) and 355–373 (KARESFLEKRPDGPHQKEK). Positions 409-428 (PSNSGNSGHHSTRNSDQIQV) are enriched in polar residues. A Phosphoserine modification is found at Ser-481. Basic and acidic residues predominate over residues 499–520 (SKKDKERSSSKECSGHSTESTK). Over residues 571–592 (APSDKAPSEGESSGNSNAGSSA) the composition is skewed to low complexity. Over residues 602-619 (DSDEESLGYNLDSDEEEE) the composition is skewed to acidic residues. 3 positions are modified to phosphoserine: Ser-603, Ser-607, and Ser-614. The interaction with SIMC1 stretch occupies residues 635-1173 (TPAATGKPPA…QLHDFWVPDS (539 aa)). Positions 664-1166 (TYTNTLERLV…NCRPTQGQLH (503 aa)) are NSE6-like domain. The required for interaction with SLF1 and RAD18 stretch occupies residues 702 to 1173 (PIRIGEEDST…QLHDFWVPDS (472 aa)).

Belongs to the FAM178 family. In terms of assembly, forms a heterodimer with SIMC1. Interacts with SLF1 (via N-terminus); this interaction links RAD18 to the SMC5-SMC6 complex. Interacts with RAD18; this interaction is increased in a SLF1-dependent manner. Interacts with SMC5 and SMC6. In terms of tissue distribution, widely expressed. Expressed at higher level in skeletal muscle and at slightly lower level in brain, liver and heart, than in lung, kidney, spleen and thymus.

The protein resides in the nucleus. The protein localises to the PML body. Functionally, plays a role in the DNA damage response (DDR) pathway by regulating postreplication repair of UV-damaged DNA and genomic stability maintenance. The SLF1-SLF2 complex acts to link RAD18 with the SMC5-SMC6 complex at replication-coupled interstrand cross-links (ICL) and DNA double-strand breaks (DSBs) sites on chromatin during DNA repair in response to stalled replication forks. Promotes the recruitment of the SMC5-SMC6 complex to DNA lesions. Plays a role in SMC5-SMC6 complex recruitment for viral restriction. Forms a complex with SIMC1 and this complex is required to recruit SMC5-SMC6 complex to PML nuclear bodies and sites of viral replication. The sequence is that of SMC5-SMC6 complex localization factor protein 2 from Homo sapiens (Human).